Consider the following 388-residue polypeptide: Mannitol-1-phosphate 5-dehydrogenase (388 aa).

Residue 3 to 14 (ALHFGAGNIGRG) participates in NAD(+) binding.

Belongs to the mannitol dehydrogenase family.

It carries out the reaction D-mannitol 1-phosphate + NAD(+) = beta-D-fructose 6-phosphate + NADH + H(+). This Buchnera aphidicola subsp. Schizaphis graminum (strain Sg) protein is Mannitol-1-phosphate 5-dehydrogenase.